We begin with the raw amino-acid sequence, 201 residues long: 3-isopropylmalate dehydratase small subunit (201 aa).

Belongs to the LeuD family. LeuD type 1 subfamily. In terms of assembly, heterodimer of LeuC and LeuD.

The catalysed reaction is (2R,3S)-3-isopropylmalate = (2S)-2-isopropylmalate. The protein operates within amino-acid biosynthesis; L-leucine biosynthesis; L-leucine from 3-methyl-2-oxobutanoate: step 2/4. Functionally, catalyzes the isomerization between 2-isopropylmalate and 3-isopropylmalate, via the formation of 2-isopropylmaleate. The protein is 3-isopropylmalate dehydratase small subunit of Shewanella pealeana (strain ATCC 700345 / ANG-SQ1).